The sequence spans 63 residues: U-reduvitoxin-Pr4a (63 aa).

A signal peptide spans 1–19; that stretch reads MKIFGLFLLIATYMALAFA. Disulfide bonds link cysteine 24-cysteine 40, cysteine 31-cysteine 45, and cysteine 39-cysteine 52.

The protein belongs to the venom Ptu1-like knottin family. As to expression, expressed by the venom gland.

Its subcellular location is the secreted. Its function is as follows. Binds reversibly and blocks P/Q-type voltage-gated calcium channels (Cav). This Platymeris rhadamanthus (Red spot assassin bug) protein is U-reduvitoxin-Pr4a.